The following is a 549-amino-acid chain: DNA mismatch repair protein MutL (549 aa).

It belongs to the DNA mismatch repair MutL/HexB family.

Its function is as follows. This protein is involved in the repair of mismatches in DNA. It is required for dam-dependent methyl-directed DNA mismatch repair. May act as a 'molecular matchmaker', a protein that promotes the formation of a stable complex between two or more DNA-binding proteins in an ATP-dependent manner without itself being part of a final effector complex. This is DNA mismatch repair protein MutL from Pseudothermotoga lettingae (strain ATCC BAA-301 / DSM 14385 / NBRC 107922 / TMO) (Thermotoga lettingae).